Reading from the N-terminus, the 273-residue chain is Undecaprenyl-diphosphatase (273 aa).

8 consecutive transmembrane segments (helical) span residues 4–24, 45–65, 84–104, 112–132, 149–169, 187–207, 219–239, and 251–271; these read IELL…WLPI, FMSM…VVLF, TFTL…MIPF, FFNP…FIII, ITYQ…IPGT, YVAA…ASLL, AEIV…IIVI, and FKVF…YFLL.

Belongs to the UppP family.

Its subcellular location is the cell membrane. It catalyses the reaction di-trans,octa-cis-undecaprenyl diphosphate + H2O = di-trans,octa-cis-undecaprenyl phosphate + phosphate + H(+). Catalyzes the dephosphorylation of undecaprenyl diphosphate (UPP). Confers resistance to bacitracin. In Lachnoclostridium phytofermentans (strain ATCC 700394 / DSM 18823 / ISDg) (Clostridium phytofermentans), this protein is Undecaprenyl-diphosphatase.